Consider the following 439-residue polypeptide: tRNA-2-methylthio-N(6)-dimethylallyladenosine synthase (439 aa).

In terms of domain architecture, MTTase N-terminal spans 2-119 (KKLYLKTHGC…LPDLLDSVIQ (118 aa)). The [4Fe-4S] cluster site is built by C11, C48, C82, C156, C160, and C163. Residues 142-374 (RAEGPSAFVS…QNRINAKAAE (233 aa)) form the Radical SAM core domain. In terms of domain architecture, TRAM spans 377 to 439 (QSMVGTQQRI…RPYSLWGEIC (63 aa)).

It belongs to the methylthiotransferase family. MiaB subfamily. As to quaternary structure, monomer. It depends on [4Fe-4S] cluster as a cofactor.

Its subcellular location is the cytoplasm. The catalysed reaction is N(6)-dimethylallyladenosine(37) in tRNA + (sulfur carrier)-SH + AH2 + 2 S-adenosyl-L-methionine = 2-methylsulfanyl-N(6)-dimethylallyladenosine(37) in tRNA + (sulfur carrier)-H + 5'-deoxyadenosine + L-methionine + A + S-adenosyl-L-homocysteine + 2 H(+). Its function is as follows. Catalyzes the methylthiolation of N6-(dimethylallyl)adenosine (i(6)A), leading to the formation of 2-methylthio-N6-(dimethylallyl)adenosine (ms(2)i(6)A) at position 37 in tRNAs that read codons beginning with uridine. In Coxiella burnetii (strain CbuK_Q154) (Coxiella burnetii (strain Q154)), this protein is tRNA-2-methylthio-N(6)-dimethylallyladenosine synthase.